The chain runs to 307 residues: Elongation factor Ts (307 aa).

An involved in Mg(2+) ion dislocation from EF-Tu region spans residues Thr79–Val82.

This sequence belongs to the EF-Ts family.

It localises to the cytoplasm. Associates with the EF-Tu.GDP complex and induces the exchange of GDP to GTP. It remains bound to the aminoacyl-tRNA.EF-Tu.GTP complex up to the GTP hydrolysis stage on the ribosome. In Bartonella quintana (strain Toulouse) (Rochalimaea quintana), this protein is Elongation factor Ts (tsf).